An 886-amino-acid chain; its full sequence is DNA mismatch repair protein MutS (886 aa).

641-648 contacts ATP; the sequence is GPNMAGKS.

This sequence belongs to the DNA mismatch repair MutS family.

In terms of biological role, this protein is involved in the repair of mismatches in DNA. It is possible that it carries out the mismatch recognition step. This protein has a weak ATPase activity. In Rickettsia akari (strain Hartford), this protein is DNA mismatch repair protein MutS.